The primary structure comprises 915 residues: MTSLHKQIIESHNNDITKLKSSMSTRAAARRSVCLSSMSYTLGADDVTPITSNTTPSNNNNNNNTTTTITTTTTTPTISPLKQSTTGSIIPKSILVTKSGSKEEPIVSSSKSSSNSSSINNNFNNLYSASTFSSSTKKVHERPSINPGFRKPREALLSGNSDSGIIKKPSSSSTSSSSSSSSTTSNIKAPIQISHSSNSGSSSSGGNNNNSDDNSGSSTIKHTAASLSKMKLSPSHTISDSPRSSTMKSRSVSISNGSLFSPTNTSVNNSNNNTSSNIKTPTKSSISENLDQNTPPPPSSSSTTKTPTATTTTTTTTTSSSSSTSTNTTPSKSSVDDVFARLANVSKPAIKSRSLSVSASLARVEQSPPTKDKGDKESSSSSSSSSSSFSSKFTKILRSSSKTPTPTSSNTTVQPSTTSLSASKISSRKDTKSLSSFSTTTTTTTLKSSSSSSSSSSSSSKSNIASSSSSSSNNLTNLLTQSQSISSTSTSTTTTPTSTSPTLASSMSVLSSPTSTTTTSTSTTSTTTTPTKSSCTIITPSIALKLYINDLTSAEQSEILDYPQIYFTGNTNKKTKFNSQLPNNGYDNDIGEYKVVERDHIAYRFEIVSILGQGSFCQVVKGYDYKTGEMVALKILRNQKRFHNQALTEIKILEYLKTNDPNSTASIVHLNNYFYFRNHLILTFELLSMNLYDFLKVNHFQGYNLNLVRRFGAQILTSLRFLSKRNIIHADLKPENILLKSPTKSGIKLIDFGSSCFENEQIFTYIQSRFYRSPEVILGTKYDKSIDIWSLGCILVEIFTGVPLFPGSDEPEQLACIMEVLGAPPKSVIDNSTRKDIFFEDDGTPKPVKNSTTGELYTIGTKSFKDSIRSGDEDFDNFILDCLKWEPSQRITAEQGLKHDWIIKVIAPTAPSTPS.

Composition is skewed to low complexity over residues 51 to 79 (TSNT…PTIS), 108 to 119 (SSSKSSSNSSSI), 170 to 185 (SSSS…STTS), and 196 to 218 (SSNS…SGSS). 3 disordered regions span residues 51–119 (TSNT…SSSI), 132–334 (FSSS…SKSS), and 349–533 (AIKS…PTKS). Positions 234-260 (PSHTISDSPRSSTMKSRSVSISNGSLF) are enriched in polar residues. 6 stretches are compositionally biased toward low complexity: residues 261–287 (SPTN…SSIS), 300–333 (SSST…PSKS), 352–364 (SRSL…LARV), 379–391 (SSSS…SFSS), 399–425 (SSSK…ASKI), and 433–533 (SLSS…PTKS). In terms of domain architecture, Protein kinase spans 605–902 (FEIVSILGQG…AEQGLKHDWI (298 aa)). ATP-binding positions include 611 to 619 (LGQGSFCQV) and Lys-634. The active-site Proton acceptor is Asp-731.

Belongs to the protein kinase superfamily. CMGC Ser/Thr protein kinase family. MNB/DYRK subfamily.

It carries out the reaction L-seryl-[protein] + ATP = O-phospho-L-seryl-[protein] + ADP + H(+). The enzyme catalyses L-threonyl-[protein] + ATP = O-phospho-L-threonyl-[protein] + ADP + H(+). The catalysed reaction is L-tyrosyl-[protein] + ATP = O-phospho-L-tyrosyl-[protein] + ADP + H(+). This Dictyostelium discoideum (Social amoeba) protein is Probable serine/threonine-protein kinase dyrk2 (dyrk2).